The primary structure comprises 112 residues: Prothymosin alpha-B (112 aa).

Residues 1-112 are disordered; sequence MSDTAVDASV…TKKQKTDEDD (112 aa). Residues 9 to 35 show a composition bias toward basic and acidic residues; it reads SVEKSTKDLKAKEKEVVEEAENGKDKP. Composition is skewed to acidic residues over residues 41–83 and 92–101; these read ENEE…DEVE and EDDEDDDDDV. Basic and acidic residues predominate over residues 102–112; that stretch reads ETKKQKTDEDD.

Belongs to the pro/parathymosin family.

It localises to the nucleus. This chain is Prothymosin alpha-B (ptma-b), found in Xenopus laevis (African clawed frog).